Here is a 556-residue protein sequence, read N- to C-terminus: Jerky protein homolog (556 aa).

Positions 11-62 (RGEKRKRVVLTLKEKIDICTRLEKGESRKALMQEYNVGMSTLYDIRAHKAQL) constitute an HTH psq-type domain. DNA-binding regions (H-T-H motif) lie at residues 38–58 (RKAL…IRAH) and 110–142 (PMLI…FKAR). The region spanning 77-149 (QRRTLHTPKL…KARHGIKKLD (73 aa)) is the HTH CENPB-type domain. The DDE-1 domain maps to 213–382 (KDRLTVLMCA…VPSHVFRRAW (170 aa)). Phosphoserine is present on Ser-414. Residues 439–482 (SWGVAGREAEGGRPPAATSPAEVVWSSEKTPKADQDGRGDPGEG) form a disordered region. Residues 467 to 479 (KTPKADQDGRGDP) are compositionally biased toward basic and acidic residues.

The protein belongs to the tigger transposable element derived protein family. In terms of tissue distribution, expressed ubiquitously.

It is found in the nucleus. Its function is as follows. May bind DNA. The sequence is that of Jerky protein homolog from Homo sapiens (Human).